The chain runs to 180 residues: Large ribosomal subunit protein uL16 (180 aa).

The protein belongs to the universal ribosomal protein uL16 family.

This Thermococcus sibiricus (strain DSM 12597 / MM 739) protein is Large ribosomal subunit protein uL16.